The primary structure comprises 173 residues: Ribosome maturation factor RimM (173 aa).

The PRC barrel domain occupies Pro-95–Leu-169.

It belongs to the RimM family. As to quaternary structure, binds ribosomal protein uS19.

It is found in the cytoplasm. Its function is as follows. An accessory protein needed during the final step in the assembly of 30S ribosomal subunit, possibly for assembly of the head region. Essential for efficient processing of 16S rRNA. May be needed both before and after RbfA during the maturation of 16S rRNA. It has affinity for free ribosomal 30S subunits but not for 70S ribosomes. In Mycolicibacterium smegmatis (strain ATCC 700084 / mc(2)155) (Mycobacterium smegmatis), this protein is Ribosome maturation factor RimM.